Consider the following 2474-residue polypeptide: Serine/threonine-protein kinase TOR2 (2474 aa).

The disordered stretch occupies residues 1–62 (MNKYINKYTT…NGPNDSGRVI (62 aa)). Phosphothreonine is present on T10. Over residues 25–36 (HRTRKKLTHKSH) the composition is skewed to basic residues. A compositionally biased stretch (polar residues) spans 43–56 (STTSNTDSNHNGPN). 11 HEAT repeats span residues 588-626 (YSLTEFVRLITISYIEHEDSSVRKLAALTSCDLFIKDDI), 636-674 (HSVSEVLSKLLMIAITDPVAEIRLEILQHLGSNFDPQLA), 676-710 (PDNLRLLFMALNDEIFGIQLEAIKIIGRLSSVNPA), 756-793 (PYIDPILDVILPKCQDASSAVASTALKVLGELSVVGGK), 797-835 (RYLKELMPLIINTFQDQSNSFKRDAALTTLGQLAASSGY), 841-879 (LDYPELLGILINILKTENNPHIRRGTVRLIGILGALDPY), 917-955 (YYPTVVIHNLMKILNDPSLSIHHTAAIQAIMHIFQNLGL), 1039-1076 (RFVPETLTFFLDILENDQSNKRIVPIRILKSLVTFGPN), 1079-1116 (DYSHLIMPIVVRMTEYSAGSLKKISIITLGRLAKNINL), 1118-1155 (EMSSRIVQALVRILNNGDRELTKATMNTLSLLLLQLGT), and 1292-1331 (SYQEDLIQALCKALSSSENPPEIYQMLLNLVEFMEHDDKP). In terms of domain architecture, FAT spans 1338 to 1922 (TLGKYAQKCH…VYPLMVAIKS (585 aa)). Residues 2097–2421 (FEPVFSVISS…EHKNAIRNAR (325 aa)) enclose the PI3K/PI4K catalytic domain. Positions 2103–2109 (VISSKQR) are G-loop. The tract at residues 2276 to 2284 (GLGDRHPSN) is catalytic loop. The segment at 2296-2321 (HIDFGDCFEAAILREKFPEKVPFRLT) is activation loop. An FATC domain is found at 2442–2474 (NDLDVPEQVDKLIQQATSVENLCQHYIGWCPFW).

The protein belongs to the PI3/PI4-kinase family. The target of rapamycin complex 1 (TORC1) is composed of at least KOG1, LST8, TCO89 and either TOR1 (TORC1-A) or TOR2 (TORC1-B). TORC1 binds to and is inhibited by FKBP-rapamycin. Interacts with PIB2; following activation of PIB2 by glutamine. The target of rapamycin complex 2 (TORC2) is composed of at least AVO1, AVO2, BIT61, LST8, TOR2 and TSC11. TORC2 forms a homodimer. Contrary to TORC1, TORC2 does not bind to and is not sensitive to FKBP-rapamycin. Interacts with SLM1 and SLM2.

It localises to the cell membrane. The protein resides in the vacuole membrane. The enzyme catalyses L-seryl-[protein] + ATP = O-phospho-L-seryl-[protein] + ADP + H(+). The catalysed reaction is L-threonyl-[protein] + ATP = O-phospho-L-threonyl-[protein] + ADP + H(+). It carries out the reaction a 1,2-diacyl-sn-glycero-3-phospho-(1D-myo-inositol) + ATP = a 1,2-diacyl-sn-glycero-3-phospho-(1D-myo-inositol 4-phosphate) + ADP + H(+). In terms of biological role, phosphatidylinositol 3-kinase homolog, component of both TORC1 and TORC2. TORC1 regulates multiple cellular processes to control cell growth in response to environmental signals. Nutrient limitation and environmental stress signals cause inactivation of TORC1. Active TORC1 positively controls ribosome biogenesis via control of rRNA, ribosomal protein and tRNA gene expression, and rRNA processing. TORC1 positively controls protein biosynthesis by regulation of mRNA stability, translation initiation factor activity, and high-affinity amino acid permeases that serve to provide amino acids for use by the translation machinery. TORC1 also promotes growth by sequestering a number of nutrient and general stress-responsive transcription factors in the cytoplasm. TORC1 negatively controls macroautophagy, a process to recycle surplus cytoplasmic mass under nutrient starvation conditions. TORC1 controls many of these processes via TIP41-TAP42-mediated inhibition of the type 2A-related phosphatases PP2A and SIT4. In nutrient-rich conditions, responsible for the phosphorylation of AGC S6 kinase (S6K) YPK3, activating YPK3 kinase activity and promoting phosphorylation of ribosomal protein S6. Phosphorylates kinase SCH9 at 6 amino acids in the C-terminus, activating SCH9 kinase activity to properly regulate ribosome biogenesis, translation initiation, and entry into stationary phase. TORC2 regulates cell cycle-dependent polarization of the actin-cytoskeleton, cell wall integrity, and receptor endocytosis. TORC2 controls polarity of the actin cytoskeleton, which is required for orienting the secretory pathway toward discrete growth sites, via the RHO1/PKC1/MAPK cell integrity pathway by activating the RHO1 guanine nucleotide exchange factor ROM2. TORC2 phosphorylates the AGC kinase YPK2, an upstream effector of the cell integrity pathway. TORC2 negatively regulates calcineurin-dependent stress signaling via phosphorylation of its effector SLM1-SLM2. The sequence is that of Serine/threonine-protein kinase TOR2 (TOR2) from Saccharomyces cerevisiae (strain ATCC 204508 / S288c) (Baker's yeast).